Here is a 2121-residue protein sequence, read N- to C-terminus: PAM2 domain-containing protein UPA2 (2121 aa).

The PAM2 1 motif lies at 1–17 (MEGSSLNVAAPVFKPSG). Disordered stretches follow at residues 14–46 (KPSG…AVHA), 262–302 (QPED…SALT), 375–397 (AATT…PPST), 475–507 (ARRR…SSGG), 522–543 (ANSD…QKPL), and 586–819 (DLGR…QFSR). The segment at 339-599 (PWPYSLGLPD…GFGYEPQSPN (261 aa)) is effector domain. The span at 596–607 (QSPNAAPNGTTS) shows a compositional bias: polar residues. 2 stretches are compositionally biased toward acidic residues: residues 626 to 637 (EENDELGFDGEE) and 646 to 658 (EDAD…EEPN). Positions 679–689 (DGHDRYADDNQ) are enriched in basic and acidic residues. Residues 690–712 (SHASNDDSLQDSLTPSDEQFSNP) show a composition bias toward polar residues. A compositionally biased stretch (basic and acidic residues) spans 719–735 (REERILRRQHRAAERAA). Residues 736–745 (RRERKQRQRG) are compositionally biased toward basic residues. Composition is skewed to polar residues over residues 749–758 (SDNTLPSSSI) and 777–788 (NPRNGNTISNPS). 2 consecutive short sequence motifs (PAM2) follow at residues 858–874 (SGIS…KFGG) and 920–937 (TNAA…PGLF). The segment covering 950–960 (NSLSASPSIAV) has biased composition (polar residues). The interval 950–1012 (NSLSASPSIA…PSPPRPKASA (63 aa)) is disordered. Residues 966–981 (GADHRETENRDMQGRE) are compositionally biased toward basic and acidic residues. Positions 1046 to 1063 (SHESRLTADAPSFVPTWA) match the PAM2 4 motif. Disordered stretches follow at residues 1076-1096 (KRPS…KDLP), 1119-1261 (SKDD…EEES), and 1337-1369 (SHAR…NSSL). The span at 1198 to 1207 (HSPSISQTSD) shows a compositional bias: polar residues. Residues 1248 to 1261 (GGNDEDDYEDEEES) are compositionally biased toward acidic residues. Residues 1345 to 1369 (ETQSTIRPLRQRNSSSDVKTANSSL) show a composition bias toward polar residues. Residues 1783–2054 (LEKQAQANAD…EAKLQTLTAS (272 aa)) are a coiled coil. Residues 2099–2121 (SFASTAGSQGKKEVEVDEGGWWS) form a disordered region. The GWW signature appears at 2118–2120 (GWW).

Belongs to the UPA1 PAM2 domain-binding protein family. As to quaternary structure, might form homodimers via its C-terminal coiled-coil domain. Part of large ribonucleoprotein complexes (mRNPs) containing RNA-binding proteins RRM4 and PAB1, endosome-binding protein UPA1, core scaffold protein UPA2 and associated factor GRP1. Interacts (via PAM2 motifs) with PAB1.

Its subcellular location is the cytoplasm. It localises to the cytoskeleton. The protein localises to the endosome. Functionally, core component of endosomal mRNA transport and appears to carry out crucial scaffolding functions. The endosomal mRNA transport regulates polarity of the infectious hyphae by transporting a broad spectrum of cargo mRNAs from the nucleus to cell poles. This is PAM2 domain-containing protein UPA2 from Mycosarcoma maydis (Corn smut fungus).